We begin with the raw amino-acid sequence, 60 residues long: Toxin 5 (60 aa).

Cystine bridges form between C3/C22, C17/C39, C41/C52, and C53/C58.

Belongs to the three-finger toxin family. Short-chain subfamily. Type I alpha-neurotoxin sub-subfamily. Expressed by the venom gland.

It localises to the secreted. Binds to muscle nicotinic acetylcholine receptor (nAChR) and inhibit acetylcholine from binding to the receptor, thereby impairing neuromuscular transmission. This is Toxin 5 from Hydrophis schistosus (Beaked sea snake).